The following is a 190-amino-acid chain: dITP/XTP pyrophosphatase (190 aa).

A substrate-binding site is contributed by 7 to 12 (THNPNK). Residues glutamate 39 and aspartate 68 each contribute to the Mg(2+) site. The active-site Proton acceptor is the aspartate 68. Substrate contacts are provided by residues threonine 69, 148–151 (FGYD), lysine 171, and 176–177 (HR).

It belongs to the HAM1 NTPase family. Homodimer. Mg(2+) is required as a cofactor.

It carries out the reaction XTP + H2O = XMP + diphosphate + H(+). It catalyses the reaction dITP + H2O = dIMP + diphosphate + H(+). The catalysed reaction is ITP + H2O = IMP + diphosphate + H(+). Functionally, pyrophosphatase that catalyzes the hydrolysis of nucleoside triphosphates to their monophosphate derivatives, with a high preference for the non-canonical purine nucleotides XTP (xanthosine triphosphate), dITP (deoxyinosine triphosphate) and ITP. Seems to function as a house-cleaning enzyme that removes non-canonical purine nucleotides from the nucleotide pool, thus preventing their incorporation into DNA/RNA and avoiding chromosomal lesions. This chain is dITP/XTP pyrophosphatase, found in Christiangramia forsetii (strain DSM 17595 / CGMCC 1.15422 / KT0803) (Gramella forsetii).